The sequence spans 514 residues: Nucleus accumbens-associated protein 1 (514 aa).

Residues 30–94 (CDVSVVVKGH…CYTGRLSMNM (65 aa)) form the BTB domain. Lys-167 is covalently cross-linked (Glycyl lysine isopeptide (Lys-Gly) (interchain with G-Cter in SUMO1); alternate). Lys-167 is covalently cross-linked (Glycyl lysine isopeptide (Lys-Gly) (interchain with G-Cter in SUMO2); alternate). Lys-182 participates in a covalent cross-link: Glycyl lysine isopeptide (Lys-Gly) (interchain with G-Cter in SUMO2). Disordered stretches follow at residues 183–218 (RLWD…NRMP) and 241–279 (GPSM…EEGT). Ser-187 is modified (phosphoserine). Over residues 242–251 (PSMSERTSPG) the composition is skewed to polar residues. Ser-245 is subject to Phosphoserine; by PKC. Low complexity predominate over residues 252-264 (TSSAYTSDSPSSY). Positions 267-279 (EEDEEEDAGEEGT) are enriched in acidic residues. Glycyl lysine isopeptide (Lys-Gly) (interchain with G-Cter in SUMO2) cross-links involve residues Lys-304, Lys-438, Lys-466, and Lys-485. Residues 360 to 457 (GTNVYITRAQ…DMCTNARRVV (98 aa)) form the BEN domain. Phosphoserine occurs at positions 492 and 496.

Homooligomer; mediated by the BTB domain. Both isoforms interact with HDAC3 and HDAC4. Interacts (via BTB domain) with CUL3, PSMD7 and RCOR1. Post-translationally, phosphorylated by protein kinase C (PKC). Highly expressed in the hippocampus, brain cortex, cerebellum and brainstem. Expressed in the nucleus accumbens, olfactory tubercle, the striatum, frontal and parietal cortex and ventral pallidum. Weakly expressed in the heart, liver, kidney, spleen, testis, and skeletal muscle. Isoform 2 is expressed in the brain and liver, less abundantly expressed in the brain than isoform 1.

It localises to the nucleus. It is found in the cytoplasm. In terms of biological role, functions as a transcriptional repressor. Isoform 1 is a stronger transcriptional repressor than isoform 2. Seems to function as a transcriptional corepressor in neuronal cells through recruitment of HDAC3 and HDAC4. Contributes to tumor progression, and tumor cell proliferation and survival. This may be mediated at least in part through repressing transcriptional activity of GADD45GIP1. Required for recruiting the proteasome from the nucleus to the cytoplasm and dendritic spines. In Rattus norvegicus (Rat), this protein is Nucleus accumbens-associated protein 1 (Nacc1).